The primary structure comprises 115 residues: Dolichyl-diphosphooligosaccharide--protein glycosyltransferase subunit DAD2 (115 aa).

At 1–31 (MVKSTSKDAQDLFHSLHSAYTATPTNLKIID) the chain is on the cytoplasmic side. A helical transmembrane segment spans residues 32–52 (LYVCFAVFTALIQVAYMALVG). Residues 53 to 55 (SFP) are Lumenal-facing. A helical transmembrane segment spans residues 56–76 (FNSFLSGVLSCIGTAVLAVCL). Over 77 to 94 (RIQVNKENKEFKDLAPER) the chain is Cytoplasmic. The chain crosses the membrane as a helical span at residues 95-115 (AFADFVLCNLVLHLVIINFLG).

Belongs to the DAD/OST2 family. Component of the oligosaccharyltransferase (OST) complex.

It localises to the endoplasmic reticulum membrane. It participates in protein modification; protein glycosylation. Subunit of the oligosaccharyl transferase (OST) complex that catalyzes the initial transfer of a defined glycan (Glc(3)Man(9)GlcNAc(2) in eukaryotes) from the lipid carrier dolichol-pyrophosphate to an asparagine residue within an Asn-X-Ser/Thr consensus motif in nascent polypeptide chains, the first step in protein N-glycosylation. N-glycosylation occurs cotranslationally and the complex associates with the Sec61 complex at the channel-forming translocon complex that mediates protein translocation across the endoplasmic reticulum (ER). All subunits are required for a maximal enzyme activity. This chain is Dolichyl-diphosphooligosaccharide--protein glycosyltransferase subunit DAD2 (DAD2), found in Arabidopsis thaliana (Mouse-ear cress).